Here is a 777-residue protein sequence, read N- to C-terminus: Ribosome-releasing factor 2, mitochondrial (777 aa).

The tr-type G domain maps to Ala-68 to Glu-353. GTP-binding positions include Ala-77–Thr-84, Asp-141–His-145, and Asn-195–Asp-198.

The protein belongs to the TRAFAC class translation factor GTPase superfamily. Classic translation factor GTPase family. EF-G/EF-2 subfamily.

It is found in the mitochondrion. It carries out the reaction GTP + H2O = GDP + phosphate + H(+). Its function is as follows. Mitochondrial GTPase that mediates the disassembly of ribosomes from messenger RNA at the termination of mitochondrial protein biosynthesis. Acts in collaboration with MRRF. GTP hydrolysis follows the ribosome disassembly and probably occurs on the ribosome large subunit. Not involved in the GTP-dependent ribosomal translocation step during translation elongation. The polypeptide is Ribosome-releasing factor 2, mitochondrial (Bos taurus (Bovine)).